The primary structure comprises 397 residues: Tryptophan synthase beta chain (397 aa).

K87 is subject to N6-(pyridoxal phosphate)lysine.

Belongs to the TrpB family. Tetramer of two alpha and two beta chains. Requires pyridoxal 5'-phosphate as cofactor.

It catalyses the reaction (1S,2R)-1-C-(indol-3-yl)glycerol 3-phosphate + L-serine = D-glyceraldehyde 3-phosphate + L-tryptophan + H2O. Its pathway is amino-acid biosynthesis; L-tryptophan biosynthesis; L-tryptophan from chorismate: step 5/5. Its function is as follows. The beta subunit is responsible for the synthesis of L-tryptophan from indole and L-serine. This Escherichia coli O17:K52:H18 (strain UMN026 / ExPEC) protein is Tryptophan synthase beta chain.